The sequence spans 387 residues: uncharacterized protein (387 aa).

Disordered stretches follow at residues 1–126 (MDGR…GDDE), 138–169 (GNQG…RNEE), and 275–298 (SSIF…AGNK). Over residues 32–45 (SSDHRTSNSAESKK) the composition is skewed to basic and acidic residues. Composition is skewed to polar residues over residues 49–63 (SGKS…NNDN) and 78–93 (DLSS…SKGT). The segment covering 155 to 169 (ENGKNDIEKNNRNEE) has biased composition (basic and acidic residues). Over residues 275-296 (SSIFSDSQAVTTDDEGISSTAG) the composition is skewed to polar residues.

This sequence belongs to the ThrE exporter (TC 2.A.79) family.

This is an uncharacterized protein from Saccharomyces cerevisiae (strain ATCC 204508 / S288c) (Baker's yeast).